A 414-amino-acid chain; its full sequence is tRNA methyltransferase 10 homolog C (414 aa).

The N-terminal 35 residues, 1–35, are a transit peptide targeting the mitochondrion; the sequence is MNVTVRFLRPFARCLVPYTFHRKRSHLYSGVLQRY. Residue Ser79 is modified to Phosphoserine. The stretch at 133–171 forms a coiled coil; that stretch reads GKEKAKKAKQVKKEMKAEAREEAKRARLLETTAEEQQQD. An SAM-dependent MTase TRM10-type domain is found at 186 to 378; that stretch reads LGWKGVQAMQ…KFVPRRKHTG (193 aa).

Belongs to the class IV-like SAM-binding methyltransferase superfamily. TRM10 family. As to quaternary structure, component of mitochondrial ribonuclease P, a complex composed of TRMT10C/MRPP1, HSD17B10/MRPP2 and PRORP/MRPP3. Interacts with HSD17B10/MRPP2; forming the MRPP1-MRPP2 subcomplex of the mitochondrial ribonuclease P complex. Interacts with GRSF1.

The protein resides in the mitochondrion matrix. Its subcellular location is the mitochondrion nucleoid. The enzyme catalyses adenosine(9) in tRNA + S-adenosyl-L-methionine = N(1)-methyladenosine(9) in tRNA + S-adenosyl-L-homocysteine + H(+). It carries out the reaction guanosine(9) in tRNA + S-adenosyl-L-methionine = N(1)-methylguanosine(9) in tRNA + S-adenosyl-L-homocysteine + H(+). It catalyses the reaction an adenosine in mRNA + S-adenosyl-L-methionine = an N(1)-methyladenosine in mRNA + S-adenosyl-L-homocysteine + H(+). In terms of biological role, mitochondrial tRNA N(1)-methyltransferase involved in mitochondrial tRNA maturation. Component of mitochondrial ribonuclease P, a complex composed of TRMT10C/MRPP1, HSD17B10/MRPP2 and PRORP/MRPP3, which cleaves tRNA molecules in their 5'-ends. Together with HSD17B10/MRPP2, forms a subcomplex of the mitochondrial ribonuclease P, named MRPP1-MRPP2 subcomplex, which displays functions that are independent of the ribonuclease P activity. The MRPP1-MRPP2 subcomplex catalyzes the formation of N(1)-methylguanine and N(1)-methyladenine at position 9 (m1G9 and m1A9, respectively) in tRNAs; TRMT10C/MRPP1 acting as the catalytic N(1)-methyltransferase subunit. The MRPP1-MRPP2 subcomplex also acts as a tRNA maturation platform: following 5'-end cleavage by the mitochondrial ribonuclease P complex, the MRPP1-MRPP2 subcomplex enhances the efficiency of 3'-processing catalyzed by ELAC2, retains the tRNA product after ELAC2 processing and presents the nascent tRNA to the mitochondrial CCA tRNA nucleotidyltransferase TRNT1 enzyme. In addition to tRNA N(1)-methyltransferase activity, TRMT10C/MRPP1 also acts as a mRNA N(1)-methyltransferase by mediating methylation of adenosine residues at the N(1) position of MT-ND5 mRNA. Associates with mitochondrial DNA complexes at the nucleoids to initiate RNA processing and ribosome assembly. In Mus musculus (Mouse), this protein is tRNA methyltransferase 10 homolog C.